Reading from the N-terminus, the 254-residue chain is Vitamin B12 import ATP-binding protein BtuD (254 aa).

An ABC transporter domain is found at 1-239 (MHINHISVGN…ENLQQVFETP (239 aa)). 29–36 (GPNGSGKS) lines the ATP pocket.

It belongs to the ABC transporter superfamily. Vitamin B12 importer (TC 3.A.1.13.1) family. In terms of assembly, the complex is composed of two ATP-binding proteins (BtuD), two transmembrane proteins (BtuC) and a solute-binding protein (BtuF).

The protein localises to the cell inner membrane. The catalysed reaction is an R-cob(III)alamin(out) + ATP + H2O = an R-cob(III)alamin(in) + ADP + phosphate + H(+). Functionally, part of the ABC transporter complex BtuCDF involved in vitamin B12 import. Responsible for energy coupling to the transport system. This chain is Vitamin B12 import ATP-binding protein BtuD, found in Vibrio vulnificus (strain YJ016).